The primary structure comprises 40 residues: Natriuretic peptide PtNP-a (40 aa).

An intrachain disulfide couples Cys-9 to Cys-25. Positions 17-34 are enriched in polar residues; it reads ISNTSGMGCRNPIQNRPK. Residues 17–40 are disordered; sequence ISNTSGMGCRNPIQNRPKSTPGGS.

The protein belongs to the natriuretic peptide family. Expressed by the venom gland.

It localises to the secreted. Snake venom natriuretic peptide that targets NPR1 and possibly NPR2. Exhibits hypotensive and vasodepressor activities. Recombinant PtNP-a demonstrates a dose-dependent stimulation of cGMP production via the natriuretic peptide receptor 1 (NPR1) (EC(50)=563 nM) in Madine Darby Canine Kidney (MDCK) cells. It also inhibits the angiotensin converting enzyme (ACE). This Pseudonaja textilis (Eastern brown snake) protein is Natriuretic peptide PtNP-a.